The following is a 417-amino-acid chain: Serine hydroxymethyltransferase (417 aa).

(6S)-5,6,7,8-tetrahydrofolate is bound by residues Leu-122 and 126–128; that span reads GHL. Lys-231 is subject to N6-(pyridoxal phosphate)lysine.

This sequence belongs to the SHMT family. Homodimer. Pyridoxal 5'-phosphate is required as a cofactor.

The protein localises to the cytoplasm. The catalysed reaction is (6R)-5,10-methylene-5,6,7,8-tetrahydrofolate + glycine + H2O = (6S)-5,6,7,8-tetrahydrofolate + L-serine. It participates in one-carbon metabolism; tetrahydrofolate interconversion. Its pathway is amino-acid biosynthesis; glycine biosynthesis; glycine from L-serine: step 1/1. Its function is as follows. Catalyzes the reversible interconversion of serine and glycine with tetrahydrofolate (THF) serving as the one-carbon carrier. This reaction serves as the major source of one-carbon groups required for the biosynthesis of purines, thymidylate, methionine, and other important biomolecules. Also exhibits THF-independent aldolase activity toward beta-hydroxyamino acids, producing glycine and aldehydes, via a retro-aldol mechanism. The polypeptide is Serine hydroxymethyltransferase (Caldicellulosiruptor saccharolyticus (strain ATCC 43494 / DSM 8903 / Tp8T 6331)).